We begin with the raw amino-acid sequence, 132 residues long: Agouti-signaling protein (132 aa).

Residues 1–22 (MDVTRLLLATLLVFLCFFTAYS) form the signal peptide. An N-linked (GlcNAc...) asparagine glycan is attached at Asn-39. A disordered region spans residues 62–88 (ISRKEAEKKRSSKKEASMKKVARPRTP). Positions 63–79 (SRKEAEKKRSSKKEASM) are enriched in basic and acidic residues. 5 disulfides stabilise this stretch: Cys-93–Cys-108, Cys-100–Cys-114, Cys-107–Cys-125, Cys-111–Cys-132, and Cys-116–Cys-123. One can recognise an Agouti domain in the interval 93–132 (CVATRDSCKPPAPACCDPCASCQCRFFRSACSCRVLSLNC).

The protein localises to the secreted. Functionally, involved in the regulation of melanogenesis. The binding of ASP to MC1R precludes alpha-MSH initiated signaling and thus blocks production of cAMP, leading to a down-regulation of eumelanogenesis (brown/black pigment) and thus increasing synthesis of pheomelanin (yellow/red pigment). The sequence is that of Agouti-signaling protein (ASIP) from Macaca radiata (Bonnet macaque).